The chain runs to 254 residues: 14-3-3-like protein GF14 epsilon (254 aa).

Phosphoserine occurs at positions 65 and 188.

The protein belongs to the 14-3-3 family. Interacts with DREB1A and DREB1B in the nucleus. Interacts with CINV1.

The protein resides in the nucleus. The protein localises to the cytoplasm. In terms of biological role, is associated with a DNA binding complex that binds to the G box, a well-characterized cis-acting DNA regulatory element found in plant genes. This Arabidopsis thaliana (Mouse-ear cress) protein is 14-3-3-like protein GF14 epsilon (GRF10).